A 208-amino-acid polypeptide reads, in one-letter code: 3-demethoxyubiquinol 3-hydroxylase (208 aa).

6 residues coordinate Fe cation: glutamate 57, glutamate 87, histidine 90, glutamate 139, glutamate 171, and histidine 174.

It belongs to the COQ7 family. Fe cation serves as cofactor.

It localises to the cell membrane. It carries out the reaction a 5-methoxy-2-methyl-3-(all-trans-polyprenyl)benzene-1,4-diol + AH2 + O2 = a 3-demethylubiquinol + A + H2O. It participates in cofactor biosynthesis; ubiquinone biosynthesis. In terms of biological role, catalyzes the hydroxylation of 2-nonaprenyl-3-methyl-6-methoxy-1,4-benzoquinol during ubiquinone biosynthesis. The polypeptide is 3-demethoxyubiquinol 3-hydroxylase (Burkholderia vietnamiensis (strain G4 / LMG 22486) (Burkholderia cepacia (strain R1808))).